A 103-amino-acid polypeptide reads, in one-letter code: ATP synthase F(0) complex subunit g, mitochondrial (103 aa).

Residue Ala-2 is modified to N-acetylalanine. Residues Lys-11, Lys-24, Lys-35, and Lys-54 each carry the N6-acetyllysine modification.

It belongs to the ATPase g subunit family. Component of the ATP synthase complex composed at least of ATP5F1A/subunit alpha, ATP5F1B/subunit beta, ATP5MC1/subunit c (homooctomer), MT-ATP6/subunit a, MT-ATP8/subunit 8, ATP5ME/subunit e, ATP5MF/subunit f, ATP5MG/subunit g, ATP5MK/subunit k, ATP5MJ/subunit j, ATP5F1C/subunit gamma, ATP5F1D/subunit delta, ATP5F1E/subunit epsilon, ATP5PF/subunit F6, ATP5PB/subunit b, ATP5PD/subunit d, ATP5PO/subunit OSCP. ATP synthase complex consists of a soluble F(1) head domain (subunits alpha(3) and beta(3)) - the catalytic core - and a membrane F(0) domain - the membrane proton channel (subunits c, a, 8, e, f, g, k and j). These two domains are linked by a central stalk (subunits gamma, delta, and epsilon) rotating inside the F1 region and a stationary peripheral stalk (subunits F6, b, d, and OSCP).

The protein localises to the mitochondrion. Its subcellular location is the mitochondrion inner membrane. Functionally, subunit g, of the mitochondrial membrane ATP synthase complex (F(1)F(0) ATP synthase or Complex V) that produces ATP from ADP in the presence of a proton gradient across the membrane which is generated by electron transport complexes of the respiratory chain. ATP synthase complex consist of a soluble F(1) head domain - the catalytic core - and a membrane F(1) domain - the membrane proton channel. These two domains are linked by a central stalk rotating inside the F(1) region and a stationary peripheral stalk. During catalysis, ATP synthesis in the catalytic domain of F(1) is coupled via a rotary mechanism of the central stalk subunits to proton translocation. In vivo, can only synthesize ATP although its ATP hydrolase activity can be activated artificially in vitro. Part of the complex F(0) domain. This chain is ATP synthase F(0) complex subunit g, mitochondrial, found in Mus musculus (Mouse).